We begin with the raw amino-acid sequence, 153 residues long: Superoxide dismutase [Cu-Zn] (153 aa).

N-linked (GlcNAc...) asparagine glycosylation is present at N24. The Cu cation site is built by H47, H49, and H64. An intrachain disulfide couples C58 to C147. Residues H64, H72, H81, and D84 each contribute to the Zn(2+) site. Position 121 (H121) interacts with Cu cation. Basic and acidic residues predominate over residues 126 to 137; it reads DLGRGGNEESKK. The disordered stretch occupies residues 126 to 145; that stretch reads DLGRGGNEESKKTGNAGPRP. R144 is a substrate binding site.

This sequence belongs to the Cu-Zn superoxide dismutase family. As to quaternary structure, homodimer. Cu cation serves as cofactor. Requires Zn(2+) as cofactor.

It localises to the cytoplasm. It carries out the reaction 2 superoxide + 2 H(+) = H2O2 + O2. Functionally, destroys radicals which are normally produced within the cells and which are toxic to biological systems. The protein is Superoxide dismutase [Cu-Zn] of Humicola lutea.